The chain runs to 588 residues: Hyaluronan synthase 1 (588 aa).

Residues 1-28 (MKEKAAETMEIPEGIPKDLEPKHPTLWR) lie on the Cytoplasmic side of the membrane. Residues 29–49 (IIYYSFGVVLLATITAAYVAE) traverse the membrane as a helical segment. Residues 50 to 61 (FQVLKHEAILFS) are Extracellular-facing. Residues 62–82 (LGLYGLAMLLHLMMQSLFAFL) form a helical membrane-spanning segment. Residues 83-411 (EIRRVNKSEL…IWMTYESVVS (329 aa)) lie on the Cytoplasmic side of the membrane. Residues 412-432 (FIFPFFITATVIRLIYAGTIW) form a helical membrane-spanning segment. A topological domain (extracellular) is located at residue Asn433. The chain crosses the membrane as a helical span at residues 434–454 (VVWLLLCIQIMSLFKSIYACW). The Cytoplasmic portion of the chain corresponds to 455-456 (LR). The chain crosses the membrane as a helical span at residues 457 to 477 (GNFIMLLMSLYSMLYMTGLLP). The Extracellular portion of the chain corresponds to 478-505 (SKYFALLTLNKTGWGTSGRKKIVGNYMP). A helical membrane pass occupies residues 506–526 (ILPLSIWAAVLCGGVGYSIYM). Residues 527 to 543 (DCQNDWSTPEKQKEMYH) are Cytoplasmic-facing. A helical transmembrane segment spans residues 544 to 564 (LLYGCVGYVMYWVIMAVMYWV). Over 565-588 (WVKRCCRKRSQTVTLVHDIPDMCV) the chain is Extracellular.

This sequence belongs to the NodC/HAS family. Mg(2+) serves as cofactor. As to expression, expression moves as a gradient through the embryo. The mRNA is first expressed in the animal region of the blastula, and by early gastrula is found everywhere except in the outer layer of the dorsal blastopore lip. By mid-gastrula, protein is present in the inner ectodermal layer and the endoderm, then disappears from dorsal ectoderm as the neural plate is induced and later decays in a dorsoventral direction. Last expressed in ventral regions of the gut at the tailbud stage (at protein level).

Its subcellular location is the membrane. It carries out the reaction [hyaluronan](n) + UDP-N-acetyl-alpha-D-glucosamine = N-acetyl-beta-D-glucosaminyl-(1-&gt;4)-[hyaluronan](n) + UDP + H(+). The catalysed reaction is N-acetyl-beta-D-glucosaminyl-(1-&gt;4)-[hyaluronan](n) + UDP-alpha-D-glucuronate = [hyaluronan](n+1) + UDP + H(+). Its pathway is glycan biosynthesis; hyaluronan biosynthesis. Functionally, catalyzes the addition of GlcNAc or GlcUA monosaccharides to the nascent hyaluronan polymer. Therefore, it is essential to hyaluronan synthesis a major component of most extracellular matrices that has a structural role in tissues architectures and regulates cell adhesion, migration and differentiation. Also able to catalyze the synthesis of chito-oligosaccharide depending on the substrate. The protein is Hyaluronan synthase 1 (has1) of Xenopus laevis (African clawed frog).